A 183-amino-acid chain; its full sequence is Nascent polypeptide-associated complex subunit beta (183 aa).

An NAC-A/B domain is found at 62–127 (GADDKKLQTT…GEEKELTELV (66 aa)). Residues 150–183 (QNMQKQAGTEGKKDEDEDDIPDLVEGENFESNVE) form a disordered region. The segment covering 164–183 (EDEDDIPDLVEGENFESNVE) has biased composition (acidic residues).

Belongs to the NAC-beta family. In terms of assembly, part of the nascent polypeptide-associated complex (NAC), consisting of egd2 and egd1. NAC associates with ribosomes via egd1.

Its subcellular location is the cytoplasm. It is found in the nucleus. Component of the nascent polypeptide-associated complex (NAC), a dynamic component of the ribosomal exit tunnel, protecting the emerging polypeptides from interaction with other cytoplasmic proteins to ensure appropriate nascent protein targeting. The NAC complex also promotes mitochondrial protein import by enhancing productive ribosome interactions with the outer mitochondrial membrane and blocks the inappropriate interaction of ribosomes translating non-secretory nascent polypeptides with translocation sites in the membrane of the endoplasmic reticulum. EGD1 may act as a transcription factor that exert a negative effect on the expression of several genes that are transcribed by RNA polymerase II. This is Nascent polypeptide-associated complex subunit beta (egd1) from Neosartorya fischeri (strain ATCC 1020 / DSM 3700 / CBS 544.65 / FGSC A1164 / JCM 1740 / NRRL 181 / WB 181) (Aspergillus fischerianus).